A 543-amino-acid polypeptide reads, in one-letter code: CTP synthase (543 aa).

Residues 1-267 are amidoligase domain; that stretch reads MKQTKYIFVT…LSPIAEILDL (267 aa). S15 serves as a coordination point for CTP. S15 is a UTP binding site. Residues 16–21 and D73 contribute to the ATP site; that span reads SLGKGI. Mg(2+) contacts are provided by D73 and E141. CTP is bound by residues 148-150, 188-193, and K224; these read DIE and KTKPTQ. Residues 188-193 and K224 contribute to the UTP site; that span reads KTKPTQ. The 252-residue stretch at 292–543 folds into the Glutamine amidotransferase type-1 domain; it reads KIAFVGKYVD…IKAAINYEDN (252 aa). G354 serves as a coordination point for L-glutamine. C381 (nucleophile; for glutamine hydrolysis) is an active-site residue. L-glutamine-binding positions include 382–385, E405, and R473; that span reads LGMQ. Residues H516 and E518 contribute to the active site.

Belongs to the CTP synthase family. In terms of assembly, homotetramer.

The catalysed reaction is UTP + L-glutamine + ATP + H2O = CTP + L-glutamate + ADP + phosphate + 2 H(+). The enzyme catalyses L-glutamine + H2O = L-glutamate + NH4(+). It catalyses the reaction UTP + NH4(+) + ATP = CTP + ADP + phosphate + 2 H(+). The protein operates within pyrimidine metabolism; CTP biosynthesis via de novo pathway; CTP from UDP: step 2/2. With respect to regulation, allosterically activated by GTP, when glutamine is the substrate; GTP has no effect on the reaction when ammonia is the substrate. The allosteric effector GTP functions by stabilizing the protein conformation that binds the tetrahedral intermediate(s) formed during glutamine hydrolysis. Inhibited by the product CTP, via allosteric rather than competitive inhibition. Its function is as follows. Catalyzes the ATP-dependent amination of UTP to CTP with either L-glutamine or ammonia as the source of nitrogen. Regulates intracellular CTP levels through interactions with the four ribonucleotide triphosphates. The polypeptide is CTP synthase (Campylobacter jejuni subsp. jejuni serotype O:6 (strain 81116 / NCTC 11828)).